A 401-amino-acid chain; its full sequence is Enoyl-[acyl-carrier-protein] reductase [NADH] (401 aa).

NAD(+)-binding positions include 48 to 53, 74 to 75, 111 to 112, and 139 to 140; these read GSSSGY, FE, DA, and LA. Position 225 (tyrosine 225) interacts with substrate. The active-site Proton donor is tyrosine 235. Residues lysine 244 and 273 to 275 contribute to the NAD(+) site; that span reads VVT.

This sequence belongs to the TER reductase family. As to quaternary structure, monomer.

The enzyme catalyses a 2,3-saturated acyl-[ACP] + NAD(+) = a (2E)-enoyl-[ACP] + NADH + H(+). Its pathway is lipid metabolism; fatty acid biosynthesis. Involved in the final reduction of the elongation cycle of fatty acid synthesis (FAS II). Catalyzes the reduction of a carbon-carbon double bond in an enoyl moiety that is covalently linked to an acyl carrier protein (ACP). The protein is Enoyl-[acyl-carrier-protein] reductase [NADH] of Shewanella putrefaciens (strain CN-32 / ATCC BAA-453).